We begin with the raw amino-acid sequence, 212 residues long: Pyrrolidone-carboxylate peptidase (212 aa).

Catalysis depends on residues Glu78, Cys141, and His165.

This sequence belongs to the peptidase C15 family. As to quaternary structure, homotetramer.

It localises to the cytoplasm. It catalyses the reaction Release of an N-terminal pyroglutamyl group from a polypeptide, the second amino acid generally not being Pro.. In terms of biological role, removes 5-oxoproline from various penultimate amino acid residues except L-proline. The chain is Pyrrolidone-carboxylate peptidase from Staphylococcus aureus (strain NCTC 8325 / PS 47).